The chain runs to 229 residues: 2-C-methyl-D-erythritol 4-phosphate cytidylyltransferase (229 aa).

The protein belongs to the IspD/TarI cytidylyltransferase family. IspD subfamily.

The catalysed reaction is 2-C-methyl-D-erythritol 4-phosphate + CTP + H(+) = 4-CDP-2-C-methyl-D-erythritol + diphosphate. Its pathway is isoprenoid biosynthesis; isopentenyl diphosphate biosynthesis via DXP pathway; isopentenyl diphosphate from 1-deoxy-D-xylulose 5-phosphate: step 2/6. In terms of biological role, catalyzes the formation of 4-diphosphocytidyl-2-C-methyl-D-erythritol from CTP and 2-C-methyl-D-erythritol 4-phosphate (MEP). The polypeptide is 2-C-methyl-D-erythritol 4-phosphate cytidylyltransferase (Bacillus pumilus (strain SAFR-032)).